Consider the following 495-residue polypeptide: MKYRDLRDFLSLLEQRGELKRISQPIDPYLEMTEIADRTLRAGGPALLFENPKGYNMPVLCNLFGTAKRVAMGMGQEDVSALRDVGKLLAFLKEPDPPKGFRDLFDKLPKFKQVLNMPTKCLSSAPCQEQVWEGEDVDLSRIPVMHCWPEDAAPLVSWGLTVTRGPHKERQNLGIYRQQVLGKNKLIMRWLSHRGGALDYQEWCEAHPGERFPVAVALGADPATILAAVTPVPDTLSEYAFAGLLRGHKTEVVKCLSNSLEVPASAEIVLEGYIEQGEMAPEGPYGDHTGYYNEIDSFPVFTVTHITQRKDAIYHSTYTGRPPDEPAVMGVALNEVFVPILQKQFPEIVDFYLPPEGCSYRLAVVTIKKQYAGHAKRVMMGVWSFLRQFMYTKFVIVCDDDINARDWNDVIWAITTRMDPSRDTVLIENTPIDYLDFASPVSGLGSKMGLDATNKWPAETPREWGRPIKMDEEVRARVDAIWDELAIFSDKETKR.

Mn(2+) is bound at residue Asn172. Prenylated FMN is bound by residues 175–177, 189–191, and 194–195; these read IYR, RWL, and RG. Glu238 provides a ligand contact to Mn(2+). Asp287 functions as the Proton donor in the catalytic mechanism.

This sequence belongs to the UbiD family. In terms of assembly, homohexamer. It depends on prenylated FMN as a cofactor. Mn(2+) serves as cofactor.

The protein resides in the cell membrane. The enzyme catalyses a 4-hydroxy-3-(all-trans-polyprenyl)benzoate + H(+) = a 2-(all-trans-polyprenyl)phenol + CO2. Its pathway is cofactor biosynthesis; ubiquinone biosynthesis. Functionally, catalyzes the decarboxylation of 3-octaprenyl-4-hydroxy benzoate to 2-octaprenylphenol, an intermediate step in ubiquinone biosynthesis. The polypeptide is 3-octaprenyl-4-hydroxybenzoate carboxy-lyase (Yersinia enterocolitica serotype O:8 / biotype 1B (strain NCTC 13174 / 8081)).